A 422-amino-acid chain; its full sequence is Tyrosine--tRNA ligase (422 aa).

Tyrosine 36 is a binding site for L-tyrosine. The 'HIGH' region motif lies at 41 to 50 (PTADSLHIGH). Residues tyrosine 175 and glutamine 179 each contribute to the L-tyrosine site. Positions 235 to 239 (KFGKT) match the 'KMSKS' region motif. Lysine 238 serves as a coordination point for ATP. The S4 RNA-binding domain occupies 354–411 (TSLQEALTKSKLATSRSQARYFIKSNAITINAHKQSKIEYIFQDSDRIYNLYTLLKRG).

This sequence belongs to the class-I aminoacyl-tRNA synthetase family. TyrS type 1 subfamily. As to quaternary structure, homodimer.

It is found in the cytoplasm. The enzyme catalyses tRNA(Tyr) + L-tyrosine + ATP = L-tyrosyl-tRNA(Tyr) + AMP + diphosphate + H(+). In terms of biological role, catalyzes the attachment of tyrosine to tRNA(Tyr) in a two-step reaction: tyrosine is first activated by ATP to form Tyr-AMP and then transferred to the acceptor end of tRNA(Tyr). This chain is Tyrosine--tRNA ligase, found in Blochmanniella floridana.